The chain runs to 448 residues: Dual specificity mitogen-activated protein kinase kinase 5 (448 aa).

Positions 18-25 are interaction with MAPK7; sequence VIRIKIPN. Positions 18–109 constitute a PB1 domain; that stretch reads VIRIKIPNSG…EPLQIFPRAC (92 aa). The segment at 64–68 is interaction with MAP3K2/MAP3K3; it reads DEDGD. Residues 116–144 form a disordered region; it reads NIHGLKVNTRAGPSQHSSPAVSDSLPSNS. Residues 117 to 131 form an interaction with MAPK7 region; the sequence is IHGLKVNTRAGPSQH. Residues 126 to 144 are compositionally biased toward polar residues; it reads AGPSQHSSPAVSDSLPSNS. Residues 166 to 409 enclose the Protein kinase domain; the sequence is IRYRDTLGHG…MRKQPKERPA (244 aa). ATP contacts are provided by residues 172–180 and Lys195; that span reads LGHGNGGTV. The active-site Proton acceptor is Asp283. Ser311 carries the phosphoserine modification. Thr315 is subject to Phosphothreonine.

Belongs to the protein kinase superfamily. STE Ser/Thr protein kinase family. MAP kinase kinase subfamily. Interacts with PARD6A, MAP3K3 and MAPK7. Forms a complex with SQSTM1 and PRKCZ or PRKCI. As to quaternary structure, (Microbial infection) Interacts with Yersinia YopJ. Requires Mg(2+) as cofactor. In terms of processing, activated by phosphorylation on Ser/Thr by MAP kinase kinase kinases. Post-translationally, (Microbial infection) Yersinia YopJ may acetylate Ser/Thr residues, preventing phosphorylation and activation, thus blocking the MAPK signaling pathway. Expressed in many adult tissues. Abundant in heart and skeletal muscle.

The enzyme catalyses L-seryl-[protein] + ATP = O-phospho-L-seryl-[protein] + ADP + H(+). It catalyses the reaction L-threonyl-[protein] + ATP = O-phospho-L-threonyl-[protein] + ADP + H(+). It carries out the reaction L-tyrosyl-[protein] + ATP = O-phospho-L-tyrosyl-[protein] + ADP + H(+). Its function is as follows. Acts as a scaffold for the formation of a ternary MAP3K2/MAP3K3-MAP3K5-MAPK7 signaling complex. Activation of this pathway appears to play a critical role in protecting cells from stress-induced apoptosis, neuronal survival and cardiac development and angiogenesis. As part of the MAPK/ERK signaling pathway, acts as a negative regulator of apoptosis in cardiomyocytes via promotion of STUB1/CHIP-mediated ubiquitination and degradation of ICER-type isoforms of CREM. This is Dual specificity mitogen-activated protein kinase kinase 5 (MAP2K5) from Homo sapiens (Human).